The chain runs to 700 residues: Auxin response factor 18 (700 aa).

Positions 128–230 (FAKTLTQSDA…DLCVGIRRAK (103 aa)) form a DNA-binding region, TF-B3. Disordered regions lie at residues 234–254 (VGGPEFLPPPPPPPPTPAAGG) and 560–595 (VKKSSSDGNAENTVNKSNSDVSSPRSNQNGTTDNLS). Positions 239–250 (FLPPPPPPPPTP) are enriched in pro residues. Residues 565 to 594 (SDGNAENTVNKSNSDVSSPRSNQNGTTDNL) are compositionally biased toward polar residues. The PB1 domain maps to 614-697 (TGHCKVFMQS…NILTDTSGDN (84 aa)).

The protein belongs to the ARF family. In terms of assembly, homodimers and heterodimers. As to expression, expressed in roots, culms, leaves and young panicles.

Its subcellular location is the nucleus. Auxin response factors (ARFs) are transcriptional factors that bind specifically to the DNA sequence 5'-TGTCTC-3' found in the auxin-responsive promoter elements (AuxREs). In Oryza sativa subsp. japonica (Rice), this protein is Auxin response factor 18 (ARF18).